Here is a 449-residue protein sequence, read N- to C-terminus: Capsid protein (449 aa).

Residues 1–43 are DNA-binding; that stretch reads MARRARRPRGRFYAFRRGRWHNLKRLRRRYKFRHRRRQRYRRR. Residues 6-47 are nuclear localization signals; that stretch reads RRPRGRFYAFRRGRWHNLKRLRRRYKFRHRRRQRYRRRAFRK.

It belongs to the gyrovirus capsid protein family. Homomultimer (Potential). Interacts with Rep; this interaction relocates Rep into the nucleus.

The protein localises to the host nucleus. Its subcellular location is the virion. Its function is as follows. Self-assembles to form the virion icosahedral capsid with a T=1 symmetry. This very small capsid (25 nm in diameter) allows the virus to be very stable in the environment and resistant to some disinfectants, including detergents. Essential for the initial attachment to host receptors. After attachment, the virus is endocytosed and traffics to the nucleus. The capsid protein binds and transports the viral genome and Rep across the nuclear envelope. This chain is Capsid protein (VP1), found in Chicken anemia virus (isolate USA CIA-1) (CAV).